The sequence spans 163 residues: Interleukin-17F (163 aa).

The first 30 residues, 1-30 (MTVKTLHGPAMVKYLLLSILGLAFLSEAAA), serve as a signal peptide directing secretion. Residue Asn-83 is glycosylated (N-linked (GlcNAc...) asparagine). Intrachain disulfides connect Cys-102–Cys-152 and Cys-107–Cys-154.

Belongs to the IL-17 family. In terms of assembly, homodimer; disulfide-linked. Heterodimer with IL17A (IL17A-IL17F). Forms complexes with IL17RA and IL17RC receptors with 2:1 binding stoichiometry: two receptor chains for one interleukin molecule. IL17F homodimer forms predominantly complexes with IL17RC homodimer, whereas IL17A-IL17F favors complexes with IL17RA-IL17RC. IL17RA and IL17RC chains cannot distinguish between IL17A and IL17F molecules, potentially enabling the formation of topologically distinct complexes. As to expression, expressed in T-helper 1 and T-helper 2 cells, basophils and mast cells.

The protein localises to the secreted. Effector cytokine of innate and adaptive immune system involved in antimicrobial host defense and maintenance of tissue integrity. IL17A-IL17F signals via IL17RA-IL17RC heterodimeric receptor complex, triggering homotypic interaction of IL17RA and IL17RC chains with TRAF3IP2 adapter through SEFIR domains. This leads to downstream TRAF6-mediated activation of NF-kappa-B and MAPkinase pathways ultimately resulting in transcriptional activation of cytokines, chemokines, antimicrobial peptides and matrix metalloproteinases, with potential strong immune inflammation. IL17A-IL17F is primarily involved in host defense against extracellular bacteria and fungi by inducing neutrophilic inflammation. As signature effector cytokine of T-helper 17 cells (Th17), primarily induces neutrophil activation and recruitment at infection and inflammatory sites. Stimulates the production of antimicrobial beta-defensins DEFB1, DEFB103A, and DEFB104A by mucosal epithelial cells, limiting the entry of microbes through the epithelial barriers. IL17F homodimer can signal via IL17RC homodimeric receptor complex, triggering downstream activation of TRAF6 and NF-kappa-B signaling pathway. Via IL17RC induces transcriptional activation of IL33, a potent cytokine that stimulates group 2 innate lymphoid cells and adaptive T-helper 2 cells involved in pulmonary allergic response to fungi. Likely via IL17RC, promotes sympathetic innervation of peripheral organs by coordinating the communication between gamma-delta T cells and parenchymal cells. Stimulates sympathetic innervation of thermogenic adipose tissue by driving TGFB1 expression. Regulates the composition of intestinal microbiota and immune tolerance by inducing antimicrobial proteins that specifically control the growth of commensal Firmicutes and Bacteroidetes. The polypeptide is Interleukin-17F (IL17F) (Homo sapiens (Human)).